Reading from the N-terminus, the 229-residue chain is Cytidylate kinase (229 aa).

Residue 12-20 (GPSGSGKGT) coordinates ATP.

Belongs to the cytidylate kinase family. Type 1 subfamily.

The protein localises to the cytoplasm. It catalyses the reaction CMP + ATP = CDP + ADP. It carries out the reaction dCMP + ATP = dCDP + ADP. This chain is Cytidylate kinase, found in Stutzerimonas stutzeri (strain A1501) (Pseudomonas stutzeri).